The primary structure comprises 120 residues: Chemokine vCXCL1 (120 aa).

Belongs to the intercrine alpha (chemokine CxC) family. Interacts with host CXCR1 and CXCR2.

In terms of biological role, acts as a functional chemokine, inducing calcium mobilization, chemotaxis, and degranulation of neutrophils. Contributes to the induction of neutrophil chemotaxis by interacting with host CXCR1 and CXCR2 receptors. The protein is Chemokine vCXCL1 (UL146) of Human cytomegalovirus (strain Merlin) (HHV-5).